Reading from the N-terminus, the 583-residue chain is Arginine--tRNA ligase (583 aa).

Residues 123 to 133 (PNIAKEMHVGH) carry the 'HIGH' region motif.

This sequence belongs to the class-I aminoacyl-tRNA synthetase family. Monomer.

It is found in the cytoplasm. The enzyme catalyses tRNA(Arg) + L-arginine + ATP = L-arginyl-tRNA(Arg) + AMP + diphosphate. This is Arginine--tRNA ligase from Blochmanniella floridana.